The primary structure comprises 130 residues: Small ribosomal subunit protein uS9 (130 aa).

This sequence belongs to the universal ribosomal protein uS9 family.

This Yersinia enterocolitica serotype O:8 / biotype 1B (strain NCTC 13174 / 8081) protein is Small ribosomal subunit protein uS9.